A 195-amino-acid polypeptide reads, in one-letter code: dITP/XTP pyrophosphatase (195 aa).

Substrate is bound at residue 7 to 12 (SSNKGK). E38 and D68 together coordinate Mg(2+). The active-site Proton acceptor is D68. Residues S69, 150-153 (FGYD), K173, and 178-179 (HR) each bind substrate.

This sequence belongs to the HAM1 NTPase family. Homodimer. Mg(2+) is required as a cofactor.

It carries out the reaction XTP + H2O = XMP + diphosphate + H(+). The enzyme catalyses dITP + H2O = dIMP + diphosphate + H(+). It catalyses the reaction ITP + H2O = IMP + diphosphate + H(+). Functionally, pyrophosphatase that catalyzes the hydrolysis of nucleoside triphosphates to their monophosphate derivatives, with a high preference for the non-canonical purine nucleotides XTP (xanthosine triphosphate), dITP (deoxyinosine triphosphate) and ITP. Seems to function as a house-cleaning enzyme that removes non-canonical purine nucleotides from the nucleotide pool, thus preventing their incorporation into DNA/RNA and avoiding chromosomal lesions. The sequence is that of dITP/XTP pyrophosphatase from Nautilia profundicola (strain ATCC BAA-1463 / DSM 18972 / AmH).